We begin with the raw amino-acid sequence, 39 residues long: Bomanin Short 3 (39 aa).

An N-terminal signal peptide occupies residues 1-18 (MKFLSLAFVLGLLALANA). Positions 19 to 23 (TPLNP) are excised as a propeptide. The cysteines at positions 32 and 35 are disulfide-linked.

It belongs to the bomanin family. As to expression, hemolymph (at protein level).

The protein resides in the secreted. Its function is as follows. Secreted immune-induced peptide induced by Toll signaling. Has a role in resistance bacterial and fungal infections. The strength of antimicrobial activity appears to correlate with the overall level of expression. Has no activity against the fungus C.glabrata in vitro. In Drosophila melanogaster (Fruit fly), this protein is Bomanin Short 3.